The chain runs to 149 residues: Calmodulin (149 aa).

Position 2 is an N-acetylthreonine (threonine 2). EF-hand domains lie at 8 to 43, 44 to 79, 81 to 116, and 117 to 149; these read EQIAEFKEAFSLFDKDGDGTITTKELGTVMRSLGQN, PTEAELQDMINEVDADGNGTIDFPEFLTMMARKMKE, DSEEEIREAFRVFDKDGNGFISAAELRHVMTNLGEK, and LTDEEVDEMIREADIDGDGQVNYEEFVAMMTSK. Ca(2+)-binding residues include aspartate 21, aspartate 23, aspartate 25, threonine 27, glutamate 32, aspartate 57, aspartate 59, asparagine 61, threonine 63, glutamate 68, aspartate 94, aspartate 96, asparagine 98, and glutamate 105. N6,N6,N6-trimethyllysine is present on lysine 116. Ca(2+) is bound by residues aspartate 130, aspartate 132, aspartate 134, glutamine 136, and glutamate 141.

The protein belongs to the calmodulin family.

Functionally, calmodulin mediates the control of a large number of enzymes, ion channels and other proteins by Ca(2+). Among the enzymes to be stimulated by the calmodulin-Ca(2+) complex are a number of protein kinases and phosphatases. The chain is Calmodulin from Halichondria okadai (Marine sponge).